An 878-amino-acid chain; its full sequence is Protein argonaute 6 (878 aa).

Residues 1–17 are compositionally biased toward low complexity; that stretch reads METSSSLPLSPISIEPE. The tract at residues 1–25 is disordered; sequence METSSSLPLSPISIEPEQPSHRDYD. The 114-residue stretch at 259–372 folds into the PAZ domain; it reads PVIEFLKANQ…LPLEFCNLVS (114 aa). A Piwi domain is found at 541 to 851; that stretch reads FILCILPERK…AAAQVAQFTK (311 aa).

Belongs to the argonaute family. Ago subfamily. Expressed in roots, cotyledons and shoot meristematic region.

Its subcellular location is the nucleus. Its function is as follows. Involved in transcriptional gene silencing (TGS). Component of the RISC complex that associate with the small interfering RNA (siRNA) pathway involved in direct cytosine methylation at endogenous DNA repeats. Required for the accumulation of specific siRNAs derived from transgene and heterochromatin-related endogenous loci. Involved in RNA-directed DNA methylation (RdDM) at specific endogenous loci. Probably not required for the accumulation of siRNAs derived from transgene inverted repeats that induce post-transcriptional gene silencing (PTGS). Associates mainly with small RNAs of 24 nucleotide in length and preferentially recruits small RNAs with a 5' terminal adenosine. Targeted by turnip yellows virus (TuYV) protein P0 (via F-box-like domain) for probable proteasome degradation and thereby inactivating AGO6 function in RNA silencing. In Arabidopsis thaliana (Mouse-ear cress), this protein is Protein argonaute 6 (AGO6).